Consider the following 277-residue polypeptide: Undecaprenyl-diphosphatase (277 aa).

6 consecutive transmembrane segments (helical) span residues 47–67 (FNIIIQLAAILAVVWEFRGKI), 85–105 (VNLLIAFFPAVILGVLFADLI), 108–128 (WLFNPITVALALVVGGVIMLW), 183–203 (AATEFSFFLAMPTMVGAAVYS), 218–238 (VFAVGFVTSFVFAMVAVRALL), and 249–269 (FAWYRIAFGLLILATWQFHLI).

It belongs to the UppP family.

It localises to the cell inner membrane. It carries out the reaction di-trans,octa-cis-undecaprenyl diphosphate + H2O = di-trans,octa-cis-undecaprenyl phosphate + phosphate + H(+). Catalyzes the dephosphorylation of undecaprenyl diphosphate (UPP). Confers resistance to bacitracin. This chain is Undecaprenyl-diphosphatase, found in Pseudomonas paraeruginosa (strain DSM 24068 / PA7) (Pseudomonas aeruginosa (strain PA7)).